Consider the following 298-residue polypeptide: MSKSSVFDSVIDLPQRELTERENILLGFESRYESVHNQLNLLLNQGQLLDWSKKYHKSVLPLCKLVAEQYPLVIFHGDVGTGKTATAECIANRIVRESRTEDSALFKLSNRVRGSGKVGEMGTLLTQAWAEVCEAAGKNRRAILIIDEGDSIAASRSQNHSHHEDKVAVNTLIQGVDELRKFGGRVVVILCTNRLSVLDPALRRRAAIVEEFTRPGLTERESLFRMDLGGMGLSDSQYRQLALATGEKEHLPAWTYSDIRTRLYPAAMSRAFPERALSFNDLMELLKIMRPSPVMGDI.

ATP is bound by residues 80–85 (GTGKTA) and 204–205 (RR).

Belongs to the AAA ATPase family. In terms of assembly, homohexamer, forms a 1:1:6 CdnC:Cap7:Cap6 complex.

Functionally, regulates complex assembly in a CBASS antivirus system. CBASS (cyclic oligonucleotide-based antiphage signaling system) provides immunity against bacteriophage. The CD-NTase protein synthesizes cyclic nucleotides in response to infection; these serve as specific second messenger signals. The signals activate a diverse range of effectors, leading to bacterial cell death and thus abortive phage infection. A type III CBASS system. Expression of this CBASS system (Cap18-Cap6-Cap7-CdnC-CapW-Cap17) in a susceptible E.coli (strain MG1655) confers resistance to bacteriophage P1. Binds and disassembles an active CdnC:Cap7 complex, inhibiting the complex's ability to synthesize cyclic nucleotide second messengers. An AAA+-ATPase remodeler, in the absence of foreign threat Cap6 probably maintains the Cap7 protein in its open, inactive state. Once activated (presumably by a bacteriophage protein) Cap7 binds to and activates its cognate CD-NTase (CdnC in this bacteria) to synthesize a cyclic nucleotide second messenger which leads to abortive phage infection. The polypeptide is CD-NTase-associated protein 6 (Escherichia coli (strain KTE188)).